Here is a 269-residue protein sequence, read N- to C-terminus: Interleukin-1 beta (269 aa).

Positions 1–116 are excised as a propeptide; the sequence is MAEVPELASE…TRNNDACVHD (116 aa).

This sequence belongs to the IL-1 family. In terms of assembly, monomer. In its precursor form, weakly interacts with full-length MEFV; the mature cytokine does not interact at all. Interacts with integrins ITGAV:ITGBV and ITGA5:ITGB1; integrin-binding is required for IL1B signaling. Interacts with cargo receptor TMED10; the interaction is direct and is required for the secretion of IL1B mature form. Interacts with HSP90AB1; the interaction facilitates cargo translocation into the ERGIC. Interacts with HSP90B1; the interaction facilitates cargo translocation into the ERGIC.

The protein localises to the cytoplasm. The protein resides in the cytosol. It is found in the secreted. It localises to the lysosome. Its subcellular location is the extracellular exosome. In terms of biological role, potent pro-inflammatory cytokine. Initially discovered as the major endogenous pyrogen, induces prostaglandin synthesis, neutrophil influx and activation, T-cell activation and cytokine production, B-cell activation and antibody production, and fibroblast proliferation and collagen production. Promotes Th17 differentiation of T-cells. Synergizes with IL12/interleukin-12 to induce IFNG synthesis from T-helper 1 (Th1) cells. Plays a role in angiogenesis by inducing VEGF production synergistically with TNF and IL6. Involved in transduction of inflammation downstream of pyroptosis: its mature form is specifically released in the extracellular milieu by passing through the gasdermin-D (GSDMD) pore. This is Interleukin-1 beta (IL1B) from Macaca mulatta (Rhesus macaque).